We begin with the raw amino-acid sequence, 368 residues long: Phospho-N-acetylmuramoyl-pentapeptide-transferase (368 aa).

Helical transmembrane passes span 32 to 52 (TGGA…WIID), 79 to 99 (TPTM…VLWA), 102 to 122 (LNPY…IGFY), 142 to 160 (LLLE…TRLG), 176 to 196 (VALD…VGAG), 207 to 227 (GLAI…AYLA), 244 to 264 (AGEL…FLWF), 271 to 291 (IFMG…IAVA), 296 to 316 (IVLA…IVQV), and 345 to 365 (QIVI…LSTL).

The protein belongs to the glycosyltransferase 4 family. MraY subfamily. Mg(2+) serves as cofactor.

Its subcellular location is the cell inner membrane. It catalyses the reaction UDP-N-acetyl-alpha-D-muramoyl-L-alanyl-gamma-D-glutamyl-meso-2,6-diaminopimeloyl-D-alanyl-D-alanine + di-trans,octa-cis-undecaprenyl phosphate = di-trans,octa-cis-undecaprenyl diphospho-N-acetyl-alpha-D-muramoyl-L-alanyl-D-glutamyl-meso-2,6-diaminopimeloyl-D-alanyl-D-alanine + UMP. It functions in the pathway cell wall biogenesis; peptidoglycan biosynthesis. Functionally, catalyzes the initial step of the lipid cycle reactions in the biosynthesis of the cell wall peptidoglycan: transfers peptidoglycan precursor phospho-MurNAc-pentapeptide from UDP-MurNAc-pentapeptide onto the lipid carrier undecaprenyl phosphate, yielding undecaprenyl-pyrophosphoryl-MurNAc-pentapeptide, known as lipid I. In Nitrobacter winogradskyi (strain ATCC 25391 / DSM 10237 / CIP 104748 / NCIMB 11846 / Nb-255), this protein is Phospho-N-acetylmuramoyl-pentapeptide-transferase.